We begin with the raw amino-acid sequence, 325 residues long: Phenylalanine--tRNA ligase alpha subunit (325 aa).

E251 contributes to the Mg(2+) binding site.

It belongs to the class-II aminoacyl-tRNA synthetase family. Phe-tRNA synthetase alpha subunit type 1 subfamily. Tetramer of two alpha and two beta subunits. Requires Mg(2+) as cofactor.

It localises to the cytoplasm. The enzyme catalyses tRNA(Phe) + L-phenylalanine + ATP = L-phenylalanyl-tRNA(Phe) + AMP + diphosphate + H(+). This chain is Phenylalanine--tRNA ligase alpha subunit, found in Thermotoga neapolitana (strain ATCC 49049 / DSM 4359 / NBRC 107923 / NS-E).